The sequence spans 384 residues: L-cysteine:1D-myo-inositol 2-amino-2-deoxy-alpha-D-glucopyranoside ligase (384 aa).

Cys16 contacts Zn(2+). Residues 16–19 (CGIT), Thr31, and 54–56 (NVT) each bind L-cysteinyl-5'-AMP. Residues 18 to 28 (ITPYDATHLGH) carry the 'HIGH' region motif. A 'ERGGDP' region motif is present at residues 159 to 164 (ERGGDP). An L-cysteinyl-5'-AMP-binding site is contributed by Trp199. Position 203 (Cys203) interacts with Zn(2+). 221–223 (GSD) contributes to the L-cysteinyl-5'-AMP binding site. His228 serves as a coordination point for Zn(2+). Ile255 lines the L-cysteinyl-5'-AMP pocket. The 'KMSKS' region signature appears at 261 to 265 (KMSKS).

The protein belongs to the class-I aminoacyl-tRNA synthetase family. MshC subfamily. Monomer. It depends on Zn(2+) as a cofactor.

The enzyme catalyses 1D-myo-inositol 2-amino-2-deoxy-alpha-D-glucopyranoside + L-cysteine + ATP = 1D-myo-inositol 2-(L-cysteinylamino)-2-deoxy-alpha-D-glucopyranoside + AMP + diphosphate + H(+). Functionally, catalyzes the ATP-dependent condensation of GlcN-Ins and L-cysteine to form L-Cys-GlcN-Ins. This chain is L-cysteine:1D-myo-inositol 2-amino-2-deoxy-alpha-D-glucopyranoside ligase, found in Mycobacterium avium (strain 104).